Consider the following 80-residue polypeptide: MAPSRRMVASAFLLLAILVATEMGTTKVAEARHCLSQSHRFKGMCVSSNNCANVCRTESFPDGECKSHGLERKCFCKKVC.

The signal sequence occupies residues 1–31 (MAPSRRMVASAFLLLAILVATEMGTTKVAEA). 4 disulfide bridges follow: C34–C80, C45–C65, C51–C74, and C55–C76.

The protein belongs to the DEFL family. In terms of tissue distribution, expressed preferentially in root exodermis and xylem parenchyma cells in vasculature of root and flag leaf sheath.

The protein resides in the secreted. Its subcellular location is the extracellular space. Plant defensin-like protein involved in accumulation of cadmium (Cd) in rice leaves. Mediates Cd efflux from cytosol into extracellular spaces via chelation. This drives Cd secretion from xylem parenchyma cells into the xylem vessels, hence lowering Cd levels in cytosol meanwhile promoting Cd translocation from roots to shoots. The sequence is that of Defensin-like protein CAL1 from Oryza sativa subsp. japonica (Rice).